The following is a 123-amino-acid chain: Acidic phospholipase A2 (123 aa).

Intrachain disulfides connect Cys-26-Cys-116, Cys-28-Cys-44, Cys-43-Cys-95, Cys-49-Cys-123, Cys-50-Cys-88, Cys-57-Cys-81, and Cys-75-Cys-86. Ca(2+) contacts are provided by Tyr-27, Gly-29, and Gly-31. His-47 is an active-site residue. Asp-48 lines the Ca(2+) pocket. The active site involves Asp-89.

Belongs to the phospholipase A2 family. Group II subfamily. D49 sub-subfamily. In terms of assembly, homodimer. It depends on Ca(2+) as a cofactor. As to expression, expressed by the venom gland.

Its subcellular location is the secreted. The enzyme catalyses a 1,2-diacyl-sn-glycero-3-phosphocholine + H2O = a 1-acyl-sn-glycero-3-phosphocholine + a fatty acid + H(+). Its function is as follows. Snake venom phospholipase A2 (PLA2) that inhibits ADP-induced platelet aggregation. PLA2 catalyzes the calcium-dependent hydrolysis of the 2-acyl groups in 3-sn-phosphoglycerides. This is Acidic phospholipase A2 from Deinagkistrodon acutus (Hundred-pace snake).